Reading from the N-terminus, the 378-residue chain is MKFHIIYPKPNIVYTNMLSVTAGCRNCSFDYVSSLFKKYVNKYYNVVSNVEYSMSLSTRLVIADLWYVLENINALSVPSRAVLWLDTAWVWSNRTVPSNARNYLVLTTSQWNADILTKLGIDNAIVPRAIDDDYAVKYFNNIVVNNNDDDNVIDKKHGDGDSEVDGKFNVSGDSSDVTSNVVTTNVIGDVTDNKKYDVVAIMTGSSDGHKNEQLLLKILDALHLRKTSFLVCALPQCDAKPFSLTDDEKYELLSQSRLFAWLSESEGFGIPPVEAMSVGTPVVHFDSIYVNTPLVNAPIHFPLSVHGFKKRESPTVHGKYFASPVYNFDEIVSEFKDALSVATSLTVKDRIALHEYVMRNYSHKVILPELKKYMGGSF.

It belongs to the glycosyltransferase group 1 family. Glycosyltransferase 4 subfamily.

This Acidianus sp. F28 (AFV-2) protein is Putative glycosyltransferase ORF378.